A 267-amino-acid polypeptide reads, in one-letter code: uncharacterized protein (267 aa).

A disordered region spans residues 72–267 (LTENNNNNNT…EEKKKKKKKK (196 aa)). Positions 122 to 145 (DSVSSSTTTTIITNNKKINNNNNN) are enriched in low complexity. Residues 159–175 (ENEKSVQKSKKEKESPK) show a composition bias toward basic and acidic residues. A compositionally biased stretch (low complexity) spans 194 to 218 (SESSSSSSSSSSSESSSSESESSSS).

This is an uncharacterized protein from Dictyostelium discoideum (Social amoeba).